We begin with the raw amino-acid sequence, 209 residues long: Ion-translocating oxidoreductase complex subunit G (209 aa).

A helical membrane pass occupies residues 9 to 29 (GITLAIFAALTTGLTAVVNSL). Thr175 is modified (FMN phosphoryl threonine).

Belongs to the RnfG family. In terms of assembly, the complex is composed of six subunits: RnfA, RnfB, RnfC, RnfD, RnfE and RnfG. The cofactor is FMN.

The protein localises to the cell inner membrane. Functionally, part of a membrane-bound complex that couples electron transfer with translocation of ions across the membrane. The chain is Ion-translocating oxidoreductase complex subunit G from Photorhabdus laumondii subsp. laumondii (strain DSM 15139 / CIP 105565 / TT01) (Photorhabdus luminescens subsp. laumondii).